The primary structure comprises 475 residues: Dihydrolipoyl dehydrogenase (475 aa).

Residues glutamate 36–cysteine 45, lysine 54, and glycine 117 contribute to the FAD site. A disulfide bond links cysteine 45 and cysteine 50. Residues glycine 182–isoleucine 186, glutamate 205, valine 238, and alanine 270–arginine 273 contribute to the NAD(+) site. The FAD site is built by aspartate 313 and alanine 321. Histidine 445 functions as the Proton acceptor in the catalytic mechanism.

Belongs to the class-I pyridine nucleotide-disulfide oxidoreductase family. It depends on FAD as a cofactor.

The protein resides in the cytoplasm. The catalysed reaction is N(6)-[(R)-dihydrolipoyl]-L-lysyl-[protein] + NAD(+) = N(6)-[(R)-lipoyl]-L-lysyl-[protein] + NADH + H(+). Its function is as follows. The branched-chain alpha-keto dehydrogenase complex catalyzes the overall conversion of alpha-keto acids to acyl-CoA and CO(2). It contains multiple copies of 3 enzymatic components: branched-chain alpha-keto acid decarboxylase (E1), lipoamide acyltransferase (E2) and lipoamide dehydrogenase (E3). In Vibrio cholerae serotype O1 (strain ATCC 39315 / El Tor Inaba N16961), this protein is Dihydrolipoyl dehydrogenase (lpd).